We begin with the raw amino-acid sequence, 129 residues long: Small ribosomal subunit protein uS11 (129 aa).

Belongs to the universal ribosomal protein uS11 family. As to quaternary structure, part of the 30S ribosomal subunit. Interacts with proteins S7 and S18. Binds to IF-3.

In terms of biological role, located on the platform of the 30S subunit, it bridges several disparate RNA helices of the 16S rRNA. Forms part of the Shine-Dalgarno cleft in the 70S ribosome. The polypeptide is Small ribosomal subunit protein uS11 (Staphylococcus haemolyticus (strain JCSC1435)).